The sequence spans 110 residues: Plasma membrane ATPase (110 aa).

D72 and D76 together coordinate Mg(2+). Residues 88-110 (APESTSLNLPNDKELSEIAEQAK) form a disordered region. Residues 98–110 (NDKELSEIAEQAK) are compositionally biased toward basic and acidic residues.

The protein belongs to the cation transport ATPase (P-type) (TC 3.A.3) family. Type IIIA subfamily. The N-terminus is blocked.

The protein localises to the cell membrane. The catalysed reaction is ATP + H2O + H(+)(in) = ADP + phosphate + 2 H(+)(out). The plasma membrane ATPase of plants and fungi is a hydrogen ion pump. The proton gradient it generates drives the active transport of nutrients by H(+)-symport. The resulting external acidification and/or internal alkinization may mediate growth responses. This is Plasma membrane ATPase from Avena sativa (Oat).